A 229-amino-acid polypeptide reads, in one-letter code: Ribonuclease 3 (229 aa).

In terms of domain architecture, RNase III spans 4–133; the sequence is WEELQESVGF…FIGALYLDNG (130 aa). Glutamate 46 is a binding site for Mg(2+). Aspartate 50 is an active-site residue. Residues aspartate 119 and glutamate 122 each coordinate Mg(2+). Residue glutamate 122 is part of the active site. In terms of domain architecture, DRBM spans 159–228; it reads DYKTQLQEIV…AQFAINKLIH (70 aa).

The protein belongs to the ribonuclease III family. Homodimer. It depends on Mg(2+) as a cofactor.

The protein localises to the cytoplasm. The catalysed reaction is Endonucleolytic cleavage to 5'-phosphomonoester.. Digests double-stranded RNA. Involved in the processing of primary rRNA transcript to yield the immediate precursors to the large and small rRNAs (23S and 16S). Processes some mRNAs, and tRNAs when they are encoded in the rRNA operon. Processes pre-crRNA and tracrRNA of type II CRISPR loci if present in the organism. The protein is Ribonuclease 3 of Listeria monocytogenes serovar 1/2a (strain ATCC BAA-679 / EGD-e).